The primary structure comprises 225 residues: NAD(P)H-quinone oxidoreductase subunit K, chloroplastic (225 aa).

Positions 43, 44, 108, and 139 each coordinate [4Fe-4S] cluster.

Belongs to the complex I 20 kDa subunit family. As to quaternary structure, NDH is composed of at least 16 different subunits, 5 of which are encoded in the nucleus. [4Fe-4S] cluster is required as a cofactor.

Its subcellular location is the plastid. The protein resides in the chloroplast thylakoid membrane. The catalysed reaction is a plastoquinone + NADH + (n+1) H(+)(in) = a plastoquinol + NAD(+) + n H(+)(out). The enzyme catalyses a plastoquinone + NADPH + (n+1) H(+)(in) = a plastoquinol + NADP(+) + n H(+)(out). Its function is as follows. NDH shuttles electrons from NAD(P)H:plastoquinone, via FMN and iron-sulfur (Fe-S) centers, to quinones in the photosynthetic chain and possibly in a chloroplast respiratory chain. The immediate electron acceptor for the enzyme in this species is believed to be plastoquinone. Couples the redox reaction to proton translocation, and thus conserves the redox energy in a proton gradient. In Gossypium barbadense (Sea Island cotton), this protein is NAD(P)H-quinone oxidoreductase subunit K, chloroplastic.